The sequence spans 416 residues: MKTACLISTGTELLLGTTNDSNSVFLATRLLERGIKVIGKTVVGDSRETIKMAFASSLGLADMVISSGGLGPTRDDLTKEVACQVMGCEMVINQAEVKRLEDFFARRQRPMPESNLKQALFPAEAEIIFNPLGTAPGMYLKKDNKVLILLPGPPREMEYMFKNEIETRLERDFPQALNRVTRKTIKILGPGESQLEKILDGVIDDSPELSMALLAVDGEIHIKLTADGQDINHSKELMEKACQSIKEALGRNIVGYDNDTLLSVVAACLANTGKKIAVAESCTGGLLAKMITDLSGSSEYFWGSVTSYSNEAKMLYLNVKRETLEQYGAVSPEVAREMAQGMQKQSGTDLALSITGIAGPDGGTKDKPVGLVYICLADGGFLQVKEMHFVGNRESIRILAAKTALDLLRRHLKNGG.

Belongs to the CinA family.

This Syntrophomonas wolfei subsp. wolfei (strain DSM 2245B / Goettingen) protein is CinA-like protein.